Consider the following 528-residue polypeptide: Esterase PE16 (528 aa).

Positions 1-93 (MSFVFAVPEM…AGWYVDAEAA (93 aa)) constitute a PE domain. A linker region spans residues 94–143 (NAALVDTAATGASELGSGGRTALILGSTGTPRPPFDYMQQVYDRYIAPHY). Positions 149–369 (SGLYTPAQFQ…LRAIIELGYD (221 aa)) constitute a PE-PPE domain. Residue Ser199 is part of the active site. Residues 503–523 (IALLVFAAGIPAVAAVAILTG) traverse the membrane as a helical segment.

It belongs to the mycobacterial PE family.

The protein resides in the membrane. The enzyme catalyses a hexanoate ester + H2O = an aliphatic alcohol + hexanoate + H(+). The catalysed reaction is an octanoate ester + H2O = an aliphatic alcohol + octanoate + H(+). It catalyses the reaction a butanoate ester + H2O = an aliphatic alcohol + butanoate + H(+). With respect to regulation, esterase activity is significantly inhibited by the serine modifier phenylmethylsulfonyl fluoride (PMSF). Its function is as follows. Esterase that hydrolyzes short to medium chain fatty acid esters with the highest specific activity for p-nitrophenyl caproate (pNPC6). Has lower activity with p-nitrophenyl caprylate (pNPC8) and p-nitrophenyl butyrate (pNPC4). Has weak activity with p-nitrophenyl caprate (pNPC10) and p-nitrophenyl laurate (pNPC12). Does not possess lipolytic activity and cutinase activity. This Mycobacterium tuberculosis (strain ATCC 25618 / H37Rv) protein is Esterase PE16.